The sequence spans 306 residues: Formimidoylglutamase (306 aa).

Residues 1 to 13 (MFQNATDWTPTST) are compositionally biased toward polar residues. The disordered stretch occupies residues 1-36 (MFQNATDWTPTSTDPRDEQFGGVVEPVPTPSDADDY). N123, D147, H149, D151, D234, and D236 together coordinate Mn(2+).

Belongs to the arginase family. It depends on Mn(2+) as a cofactor.

The enzyme catalyses N-formimidoyl-L-glutamate + H2O = formamide + L-glutamate. Its pathway is amino-acid degradation; L-histidine degradation into L-glutamate; L-glutamate from N-formimidoyl-L-glutamate (hydrolase route): step 1/1. In terms of biological role, catalyzes the conversion of N-formimidoyl-L-glutamate to L-glutamate and formamide. This chain is Formimidoylglutamase, found in Halobacterium salinarum (strain ATCC 29341 / DSM 671 / R1).